The following is a 110-amino-acid chain: Large ribosomal subunit protein eL30 (110 aa).

The protein belongs to the eukaryotic ribosomal protein eL30 family.

In Methanocaldococcus jannaschii (strain ATCC 43067 / DSM 2661 / JAL-1 / JCM 10045 / NBRC 100440) (Methanococcus jannaschii), this protein is Large ribosomal subunit protein eL30 (rpl30e).